Consider the following 118-residue polypeptide: NADH-quinone oxidoreductase subunit A 2 (118 aa).

A run of 3 helical transmembrane segments spans residues 5-25, 60-80, and 87-107; these read YLPI…SLVF, FYII…LYPW, and LGMF…VGYI.

This sequence belongs to the complex I subunit 3 family. NDH-1 is composed of 14 different subunits. Subunits NuoA, H, J, K, L, M, N constitute the membrane sector of the complex.

The protein localises to the cell inner membrane. The catalysed reaction is a quinone + NADH + 5 H(+)(in) = a quinol + NAD(+) + 4 H(+)(out). NDH-1 shuttles electrons from NADH, via FMN and iron-sulfur (Fe-S) centers, to quinones in the respiratory chain. The immediate electron acceptor for the enzyme in this species is believed to be ubiquinone. Couples the redox reaction to proton translocation (for every two electrons transferred, four hydrogen ions are translocated across the cytoplasmic membrane), and thus conserves the redox energy in a proton gradient. The chain is NADH-quinone oxidoreductase subunit A 2 from Geobacter metallireducens (strain ATCC 53774 / DSM 7210 / GS-15).